Consider the following 259-residue polypeptide: Ribonuclease PH (259 aa).

Phosphate is bound by residues Arg88 and 126–128; that span reads GTR.

Belongs to the RNase PH family. Homohexameric ring arranged as a trimer of dimers.

The enzyme catalyses tRNA(n+1) + phosphate = tRNA(n) + a ribonucleoside 5'-diphosphate. In terms of biological role, phosphorolytic 3'-5' exoribonuclease that plays an important role in tRNA 3'-end maturation. Removes nucleotide residues following the 3'-CCA terminus of tRNAs; can also add nucleotides to the ends of RNA molecules by using nucleoside diphosphates as substrates, but this may not be physiologically important. Probably plays a role in initiation of 16S rRNA degradation (leading to ribosome degradation) during starvation. In Mycobacterium bovis (strain ATCC BAA-935 / AF2122/97), this protein is Ribonuclease PH.